A 119-amino-acid chain; its full sequence is MKRTFLSAKLHKVITTAVELDYEGSCEIDGVLLDAADIGAFEQIQIYNINNGNRFTTYTIRGKDNSGVISVNGAAAHKVNVGDMLIIAAYGVYSEKELESYTPRLCYVNDQNILTKISS.

Catalysis depends on Ser25, which acts as the Schiff-base intermediate with substrate; via pyruvic acid. At Ser25 the chain carries Pyruvic acid (Ser). Substrate is bound at residue Thr57. Catalysis depends on Tyr58, which acts as the Proton donor. 73–75 provides a ligand contact to substrate; that stretch reads GAA.

The protein belongs to the PanD family. In terms of assembly, heterooctamer of four alpha and four beta subunits. The cofactor is pyruvate. In terms of processing, is synthesized initially as an inactive proenzyme, which is activated by self-cleavage at a specific serine bond to produce a beta-subunit with a hydroxyl group at its C-terminus and an alpha-subunit with a pyruvoyl group at its N-terminus.

Its subcellular location is the cytoplasm. The enzyme catalyses L-aspartate + H(+) = beta-alanine + CO2. The protein operates within cofactor biosynthesis; (R)-pantothenate biosynthesis; beta-alanine from L-aspartate: step 1/1. Catalyzes the pyruvoyl-dependent decarboxylation of aspartate to produce beta-alanine. This is Aspartate 1-decarboxylase from Ruthia magnifica subsp. Calyptogena magnifica.